Consider the following 309-residue polypeptide: MTQFAFVFPGQGSQTVGMLADMAASYPIVEETFAEASAALGYDLWALTQQGPAEELNKTWQTQPALLTASVALYRVWQQHGGKAPAMMAGHSLGEYSALVCAGVIDFADAVRLVEMRGKFMQEAVPEGTGAMAAIIGLDDASIGKACEEAAEGQVVSPVNFNSPGQVVIAGHKEAVERAGAACKAAGAKRALPLPVSVPSHCALMKPAADKLAVELAKITFNAPTVPVVNNVDVKCETNGDAIRDALVRQLYNPVQWTKSVEYMAAQGVEHLYEVGPGKVLTGLTKRIVDTLTASALNEPSAMAAALEL.

Residues Ser-92 and His-201 contribute to the active site.

This sequence belongs to the FabD family.

The catalysed reaction is holo-[ACP] + malonyl-CoA = malonyl-[ACP] + CoA. It functions in the pathway lipid metabolism; fatty acid biosynthesis. The sequence is that of Malonyl CoA-acyl carrier protein transacylase (fabD) from Escherichia coli O157:H7.